The chain runs to 2551 residues: Piezo-type mechanosensitive ion channel component (2551 aa).

A run of 8 helical transmembrane segments spans residues 5–25 (YACM…AALM), 27–47 (PVGI…VPLA), 56–76 (VTAF…GHIT), 106–126 (FIDL…LVFA), 204–226 (IHFE…FAAV), 231–250 (VPGG…WATC), 256–276 (GFAL…LSIV), and 320–340 (LSLD…ALAL). A disordered region spans residues 354 to 375 (STRKARTPQPLESGSSVAPSVT). Polar residues predominate over residues 363 to 375 (PLESGSSVAPSVT). 9 helical membrane passes run 395 to 415 (TTTS…GFIY), 424 to 444 (ILMM…LLLS), 463 to 483 (PFIV…GMDL), 516 to 536 (VPLI…RQFF), 548 to 568 (LADF…SYLI), 588 to 608 (LLVR…AITG), 611 to 631 (MTGF…VFQS), 639 to 659 (IMYG…ILIY), and 695 to 715 (FLHL…VHYF). Polar residues predominate over residues 731–741 (GSAQQKPTETT). Residues 731 to 772 (GSAQQKPTETTALEPAPSKRRGSAGSLRKSQGPSAEAAPGAT) are disordered. A run of 12 helical transmembrane segments spans residues 819–839 (IAAF…FVGF), 857–877 (LISF…IEYL), 910–930 (LMSL…HAVI), 973–993 (LNFG…VSTI), 994–1014 (TYRQ…LLLL), 1022–1042 (IWGV…IVLV), 1071–1091 (GALH…LVIL), 1152–1172 (VLCG…TNIA), 1174–1194 (LLAL…SDFY), 1198–1218 (IHTI…NILI), 1239–1259 (WLVH…QIML), and 1275–1295 (ITHQ…IFQL). 2 disordered regions span residues 1426–1521 (NITE…AKDS) and 1592–1658 (ESDE…PQQQ). Residues 1430–1448 (SEMKMQRRKTLYDKSKDAP) show a composition bias toward basic and acidic residues. Positions 1466–1477 (ATASSSASPAPT) are enriched in low complexity. A compositionally biased stretch (basic and acidic residues) spans 1497-1511 (QTSKETSDSKSKMEV). Composition is skewed to low complexity over residues 1621–1634 (PTST…TTTP) and 1644–1658 (LQPL…PQQQ). 4 helical membrane-spanning segments follow: residues 1718-1738 (ISSW…VVFI), 1741-1761 (VVNA…WGTL), 1770-1790 (FWVT…IFQF), and 1817-1837 (AHYA…RYLL). Positions 1854 to 1876 (FTKPTASIDERDDSDNLSQPDSR) are disordered. 7 consecutive transmembrane segments (helical) span residues 1937 to 1957 (ALMF…FTAF), 1979 to 1999 (IPFL…RALY), 2008 to 2028 (IIFH…VVPA), 2033 to 2053 (TFNS…YMLL), 2075 to 2095 (FSMV…LYEL), 2151 to 2171 (IMGG…LCLF), and 2431 to 2451 (TFSF…VLLA). Positions 2522-2551 (EYVDDDGDTDSIPSRMSVRRPEQLQPQQPQ) are disordered.

The protein belongs to the PIEZO (TC 1.A.75) family.

Its subcellular location is the cell membrane. In terms of biological role, component of a mechanosensitive channel required for rapidly adapting mechanically activated (MA) currents. Plays a major role in nociception (response to strong or painful touch). Required for maintaining the mechanosensitivity of tarsal bristle mechanosensors. During their evalulation of potential egg-laying sites, females determine the softest substrate for their eggs first by making a coarse evaluation of substrate hardness using mechanosensitive channels nan and Piezo in the leg tarsal bristles, followed by a much finer assessment using nan, iav and Tmc mechanosensitive channels on the labellum. Acts in the nompC- and nan-expressing neurons of the female leg tarsals, to sense the mild differences in egg-laying substrate stiffness. This Drosophila melanogaster (Fruit fly) protein is Piezo-type mechanosensitive ion channel component.